The primary structure comprises 404 residues: Nesprin-4 (404 aa).

Disordered stretches follow at residues 1–91 and 277–347; these read MALS…GGKH and GQRG…GAPD. Topologically, residues 1-355 are cytoplasmic; it reads MALSLPLGPR…PDPASRQPLT (355 aa). A compositionally biased stretch (polar residues) spans 39-52; sequence EESTSPEQAQTLGQ. The segment covering 307 to 320 has biased composition (basic residues); that stretch reads HQKRLARHQRHSLL. The region spanning 347–404 is the KASH domain; that stretch reads DPASRQPLTFLLILFLLFLLLVGAMFLLPASGGPCCSHARIPRTPYLVLSYVNGLPPV. The helical; Anchor for type IV membrane protein transmembrane segment at 356-376 threads the bilayer; sequence FLLILFLLFLLLVGAMFLLPA. Residues 377–404 are Perinuclear space-facing; it reads SGGPCCSHARIPRTPYLVLSYVNGLPPV.

The protein belongs to the nesprin family. In terms of assembly, core component of LINC complexes which are composed of inner nuclear membrane SUN domain-containing proteins coupled to outer nuclear membrane KASH domain-containing nesprins. SUN and KASH domain-containing proteins seem to bind each other promiscuously; however, differentially expression of LINC complex constituents can give rise to specific assemblies. Probably part of a SUN1-containing LINC complex. Interacts with kinesins KIF5B and KLC1. Post-translationally, the disulfid bond with SUN1 or SUN2 is required for stability of the respective LINC complex under tensile forces.

It localises to the nucleus outer membrane. In terms of biological role, as a component of the LINC (LInker of Nucleoskeleton and Cytoskeleton) complex, involved in the connection between the nuclear lamina and the cytoskeleton. The nucleocytoplasmic interactions established by the LINC complex play an important role in the transmission of mechanical forces across the nuclear envelope and in nuclear movement and positioning. Behaves as a kinesin cargo, providing a functional binding site for kinesin-1 at the nuclear envelope. Hence may contribute to the establishment of secretory epithelial morphology by promoting kinesin-dependent apical migration of the centrosome and Golgi apparatus and basal localization of the nucleus. The protein is Nesprin-4 (SYNE4) of Homo sapiens (Human).